The sequence spans 537 residues: MATASGPAGIAMGSVGSLLERQDFSPEELRAALAGSRGSRQPDGLLRKGLGQREFFSYLHLPKKDGKTAKRAPRNEPDYTTLYYREHPRAGDFSKTSLPERGRFDKCRIRPSVFKPPVSTGKGFLSMQSLAAHKGQKLWRSNGSLHTLACHPPLSPGPRASQARAQLLHALSLDEGGPEPSLSDSSSGGSFGRSPGTGPSPFSSSLGHINHLGGSLDRASRSPKESGPLAVLSCLPEPPPPYEFSCPTTEEVAVLPDTCEELKRDLGDQDVSNPFTQVLEERQRLWLSELKRLYVDRLHEVAQKAERSERNLQLQLFMAQQEQRRLRKELRAQQGLAPEPRTSGPPMEADPNARPEEEARWEVCQKTAEISLLKQQLREAQAELAQKLAEIFSLKTQLRGSRAQAQAQDAELARLREAVRSLQEQAPREEAPGSCETDDCKSRGLLGEAGGNEAREGAEQLRAELLQERLRGQEQALRFEQERQTWQEEKERVLRYQREIQGSYMDMYRRNQALEQELRVLREPPTSWSPRLESSKI.

S172 is subject to Phosphoserine. Disordered stretches follow at residues 173 to 234 (LDEG…VLSC), 327 to 359 (RKEL…EEEA), and 422 to 456 (LQEQ…EARE). The segment covering 178-207 (PEPSLSDSSSGGSFGRSPGTGPSPFSSSLG) has biased composition (low complexity). Positions 295–523 (VDRLHEVAQK…LEQELRVLRE (229 aa)) form a coiled coil.

This sequence belongs to the N4BP3 family. Binds NEDD4. Interacts with 14-3-3 proteins. Interacts with MAVS.

It localises to the cytoplasmic vesicle. The protein resides in the cell projection. Its subcellular location is the axon. It is found in the dendrite. Plays a positive role in the antiviral innate immune signaling pathway. Mechanistically, interacts with MAVS and functions as a positive regulator to promote 'Lys-63'-linked polyubiquitination of MAVS and thus strengthens the interaction between MAVS and TRAF2. Also plays a role in axon and dendrite arborization during cranial nerve development. May also be important for neural crest migration and early development of other anterior structures including eye, brain and cranial cartilage. This is Nedd4 binding protein 3 from Rattus norvegicus (Rat).